Here is a 198-residue protein sequence, read N- to C-terminus: Superoxide dismutase [Fe] (198 aa).

4 residues coordinate Fe cation: His-27, His-74, Asp-158, and His-162.

It belongs to the iron/manganese superoxide dismutase family. In terms of assembly, homodimer. Fe cation serves as cofactor.

It localises to the cytoplasm. The enzyme catalyses 2 superoxide + 2 H(+) = H2O2 + O2. Destroys superoxide anion radicals which are normally produced within the cells and which are toxic to biological systems. The chain is Superoxide dismutase [Fe] (SODB) from Plasmodium malariae.